The chain runs to 461 residues: Glyceraldehyde-3-phosphate dehydrogenase-like protein (461 aa).

Phosphothreonine is present on Thr-421.

It belongs to the glyceraldehyde-3-phosphate dehydrogenase family.

In Pseudomonas aeruginosa (strain UCBPP-PA14), this protein is Glyceraldehyde-3-phosphate dehydrogenase-like protein (gap2).